The primary structure comprises 287 residues: Putative ABC transporter ATP-binding protein MM_1038 (287 aa).

Residues 5–238 (LENISVFYSR…ENVPLPPVAS (234 aa)) form the ABC transporter domain. Position 40–47 (40–47 (GEKGAGKS)) interacts with ATP.

The protein belongs to the ABC transporter superfamily.

It localises to the cell membrane. Probably part of an ABC transporter complex. Responsible for energy coupling to the transport system. This Methanosarcina mazei (strain ATCC BAA-159 / DSM 3647 / Goe1 / Go1 / JCM 11833 / OCM 88) (Methanosarcina frisia) protein is Putative ABC transporter ATP-binding protein MM_1038.